Here is a 279-residue protein sequence, read N- to C-terminus: HTH-type transcriptional regulator HdfR (279 aa).

In terms of domain architecture, HTH lysR-type spans 1–58 (MDTELLKTFLEVSRTRHFGRAAESLYLTQSAVSFRIRQLENQLGVNLFTRHRNNIRLT). The segment at residues 18–37 (FGRAAESLYLTQSAVSFRIR) is a DNA-binding region (H-T-H motif).

The protein belongs to the LysR transcriptional regulatory family.

Its function is as follows. Negatively regulates the transcription of the flagellar master operon flhDC by binding to the upstream region of the operon. The polypeptide is HTH-type transcriptional regulator HdfR (Escherichia coli (strain ATCC 8739 / DSM 1576 / NBRC 3972 / NCIMB 8545 / WDCM 00012 / Crooks)).